A 339-amino-acid chain; its full sequence is MGEKLPVVYKRFICSFPDCNATYNKNRKLQAHLCKHTGERPFPCTYEGCEKGFVTLHHLNRHVLSHTGEKPCKCETENCNLAFTTASNMRLHFKRAHSSPAQVYVCYFADCGQQFRKHNQLKIHQYIHTNQQPFKCSHEGCDKCYASPSRLKRHEKTHAGYPCRKDSTCPFVGKTWSDYMKHAAELHSEVTCSICNRTFKRKSFLKEHKKIHREERIVYRCPRENCDRTYTTKFNLKSHILTFHENLRPFVCEHEGCGKTFAMKQSLDRHFNTHDPEKKKMVKPPRPVRSLASRLSGYKPKKSKKKKKPSQTPAMESQEQQPDASKADPLPVLENLTLK.

9 C2H2-type zinc fingers span residues 12 to 36, 42 to 66, 72 to 97, 104 to 128, 134 to 158, 161 to 187, 190 to 212, 219 to 244, and 250 to 274; these read FICS…LCKH, FPCT…VLSH, CKCE…KRAH, YVCY…QYIH, FKCS…EKTH, YPCR…AELH, VTCS…KKIH, YRCP…LTFH, and FVCE…FNTH. Residues 271–339 are disordered; that stretch reads FNTHDPEKKK…LPVLENLTLK (69 aa). Residues 299-309 show a composition bias toward basic residues; sequence KPKKSKKKKKP. Positions 311 to 323 are enriched in polar residues; sequence QTPAMESQEQQPD.

It is found in the nucleus. In terms of biological role, involved in ribosomal large subunit biogenesis. Interacts with the internal control region (ICR) of approximately 50 bases within the 5S RNA genes, is required for correct transcription of these genes by RNA polymerase III. Also binds the transcribed 5S RNA's. In Anaxyrus americanus (American toad), this protein is Transcription factor IIIA (gtf3a).